The sequence spans 108 residues: UPF0060 membrane protein BLi00854/BL03049 (108 aa).

Helical transmembrane passes span 3–23, 31–51, 60–80, and 86–106; these read IAIGLFLLAGLAEIAGGYLVW, PLWYGLAGGLTLIIYGVIPAF, VYAAYGGVFIILAVLWGWLVD, and LYDWAGAVICLAGVSVMLWAP.

The protein belongs to the UPF0060 family.

The protein localises to the cell membrane. The sequence is that of UPF0060 membrane protein BLi00854/BL03049 from Bacillus licheniformis (strain ATCC 14580 / DSM 13 / JCM 2505 / CCUG 7422 / NBRC 12200 / NCIMB 9375 / NCTC 10341 / NRRL NRS-1264 / Gibson 46).